The primary structure comprises 128 residues: Histone H2A type 1-H (128 aa).

The segment at Met1–Ala22 is disordered. N-acetylserine is present on Ser2. Position 2 is a phosphoserine; by RPS6KA5 (Ser2). Citrulline; alternate is present on Arg4. The residue at position 4 (Arg4) is a Symmetric dimethylarginine; by PRMT5; alternate. At Lys6 the chain carries N6-(2-hydroxyisobutyryl)lysine. The span at Gln7–Ser19 shows a compositional bias: basic residues. Position 10 is an N6-(2-hydroxyisobutyryl)lysine; alternate (Lys10). Lys10 and Lys14 each carry N6-(beta-hydroxybutyryl)lysine; alternate. Lys10 is subject to N6-lactoyllysine; alternate. Residue Lys10 is modified to N6-succinyllysine; alternate. A Glycyl lysine isopeptide (Lys-Gly) (interchain with G-Cter in ubiquitin); alternate cross-link involves residue Lys14. Residue Lys16 forms a Glycyl lysine isopeptide (Lys-Gly) (interchain with G-Cter in ubiquitin) linkage. N6-(2-hydroxyisobutyryl)lysine; alternate is present on Lys37. Lys37 is subject to N6-(beta-hydroxybutyryl)lysine; alternate. At Lys37 the chain carries N6-crotonyllysine; alternate. N6-(2-hydroxyisobutyryl)lysine is present on residues Lys75 and Lys76. The residue at position 96 (Lys96) is an N6-(2-hydroxyisobutyryl)lysine; alternate. At Lys96 the chain carries N6-(beta-hydroxybutyryl)lysine; alternate. An N6-succinyllysine; alternate modification is found at Lys96. Lys96 is modified (N6-glutaryllysine; alternate). Lys100 is subject to N6-glutaryllysine. At Gln105 the chain carries N5-methylglutamine. Lys119 carries the N6-(2-hydroxyisobutyryl)lysine; alternate modification. Lys119 carries the N6-(beta-hydroxybutyryl)lysine; alternate modification. Residues Lys119 and Lys120 each carry the N6-crotonyllysine; alternate modification. N6-glutaryllysine; alternate is present on residues Lys119 and Lys120. Lys120 is covalently cross-linked (Glycyl lysine isopeptide (Lys-Gly) (interchain with G-Cter in ubiquitin); alternate). Thr121 bears the Phosphothreonine; by DCAF1 mark. Lys126 is modified (N6-crotonyllysine; alternate). Residue Lys126 is modified to N6-glutaryllysine; alternate.

It belongs to the histone H2A family. As to quaternary structure, the nucleosome is a histone octamer containing two molecules each of H2A, H2B, H3 and H4 assembled in one H3-H4 heterotetramer and two H2A-H2B heterodimers. The octamer wraps approximately 147 bp of DNA. Post-translationally, deiminated on Arg-4 in granulocytes upon calcium entry. In terms of processing, monoubiquitination of Lys-120 (H2AK119Ub) by RING1, TRIM37 and RNF2/RING2 complex gives a specific tag for epigenetic transcriptional repression and participates in X chromosome inactivation of female mammals. It is involved in the initiation of both imprinted and random X inactivation. Ubiquitinated H2A is enriched in inactive X chromosome chromatin. Ubiquitination of H2A functions downstream of methylation of 'Lys-27' of histone H3 (H3K27me). H2AK119Ub by RNF2/RING2 can also be induced by ultraviolet and may be involved in DNA repair. Monoubiquitination of Lys-120 (H2AK119Ub) by TRIM37 may promote transformation of cells in a number of breast cancers. Following DNA double-strand breaks (DSBs), it is ubiquitinated through 'Lys-63' linkage of ubiquitin moieties by the E2 ligase UBE2N and the E3 ligases RNF8 and RNF168, leading to the recruitment of repair proteins to sites of DNA damage. Ubiquitination at Lys-14 and Lys-16 (H2AK13Ub and H2AK15Ub, respectively) in response to DNA damage is initiated by RNF168 that mediates monoubiquitination at these 2 sites, and 'Lys-63'-linked ubiquitin are then conjugated to monoubiquitin; RNF8 is able to extend 'Lys-63'-linked ubiquitin chains in vitro. Deubiquitinated by USP51 at Lys-14 and Lys-16 (H2AK13Ub and H2AK15Ub, respectively) after damaged DNA is repaired. H2AK119Ub and ionizing radiation-induced 'Lys-63'-linked ubiquitination (H2AK13Ub and H2AK15Ub) are distinct events. Phosphorylation on Ser-2 (H2AS1ph) is enhanced during mitosis. Phosphorylation on Ser-2 by RPS6KA5/MSK1 directly represses transcription. Acetylation of H3 inhibits Ser-2 phosphorylation by RPS6KA5/MSK1. Phosphorylation at Thr-121 (H2AT120ph) by DCAF1 is present in the regulatory region of many tumor suppresor genes and down-regulates their transcription. Post-translationally, glutamine methylation at Gln-105 (H2AQ104me) by FBL is specifically dedicated to polymerase I. It is present at 35S ribosomal DNA locus and impairs binding of the FACT complex. In terms of processing, symmetric dimethylation on Arg-4 by the PRDM1/PRMT5 complex may play a crucial role in the germ-cell lineage. Crotonylation (Kcr) is specifically present in male germ cells and marks testis-specific genes in post-meiotic cells, including X-linked genes that escape sex chromosome inactivation in haploid cells. Crotonylation marks active promoters and enhancers and confers resistance to transcriptional repressors. It is also associated with post-meiotically activated genes on autosomes. Post-translationally, lactylated in macrophages by EP300/P300 by using lactoyl-CoA directly derived from endogenous or exogenous lactate, leading to stimulates gene transcription.

The protein localises to the nucleus. It is found in the chromosome. Core component of nucleosome. Nucleosomes wrap and compact DNA into chromatin, limiting DNA accessibility to the cellular machineries which require DNA as a template. Histones thereby play a central role in transcription regulation, DNA repair, DNA replication and chromosomal stability. DNA accessibility is regulated via a complex set of post-translational modifications of histones, also called histone code, and nucleosome remodeling. This chain is Histone H2A type 1-H, found in Homo sapiens (Human).